A 534-amino-acid polypeptide reads, in one-letter code: C-22 sterol desaturase ERG5B (534 aa).

The chain crosses the membrane as a helical span at residues 43 to 61 (IAVTIFAVLIAYDQFMYIW). Heme is bound at residue Cys-480.

It belongs to the cytochrome P450 family. Heme serves as cofactor.

It is found in the endoplasmic reticulum membrane. It carries out the reaction 5-dehydroepisterol + NADPH + O2 + H(+) = ergosta-5,7,22,24(28)-tetraen-3beta-ol + NADP(+) + 2 H2O. Its pathway is steroid metabolism; ergosterol biosynthesis. Its function is as follows. C-22 sterol desaturase; part of the third module of ergosterol biosynthesis pathway that includes the late steps of the pathway. ERG5A and ERG5B convert 5-dehydroepisterol into ergosta-5,7,22,24(28)-tetraen-3beta-ol by forming the C-22(23) double bond in the sterol side chain. The third module or late pathway involves the ergosterol synthesis itself through consecutive reactions that mainly occur in the endoplasmic reticulum (ER) membrane. Firstly, the squalene synthase ERG9 catalyzes the condensation of 2 farnesyl pyrophosphate moieties to form squalene, which is the precursor of all steroids. Squalene synthase is crucial for balancing the incorporation of farnesyl diphosphate (FPP) into sterol and nonsterol isoprene synthesis. Secondly, squalene is converted into lanosterol by the consecutive action of the squalene epoxidase ERG1 and the lanosterol synthase ERG7. Then, the delta(24)-sterol C-methyltransferase ERG6 methylates lanosterol at C-24 to produce eburicol. Eburicol is the substrate of the sterol 14-alpha demethylase encoded by CYP51A, CYP51B and CYP51C, to yield 4,4,24-trimethyl ergosta-8,14,24(28)-trienol. CYP51B encodes the enzyme primarily responsible for sterol 14-alpha-demethylation, and plays an essential role in ascospore formation. CYP51A encodes an additional sterol 14-alpha-demethylase, induced on ergosterol depletion and responsible for the intrinsic variation in azole sensitivity. The third CYP51 isoform, CYP51C, does not encode a sterol 14-alpha-demethylase, but is required for full virulence on host wheat ears. The C-14 reductase ERG24 then reduces the C14=C15 double bond which leads to 4,4-dimethylfecosterol. A sequence of further demethylations at C-4, involving the C-4 demethylation complex containing the C-4 methylsterol oxidases ERG25, the sterol-4-alpha-carboxylate 3-dehydrogenase ERG26 and the 3-keto-steroid reductase ERG27, leads to the production of fecosterol via 4-methylfecosterol. ERG28 has a role as a scaffold to help anchor ERG25, ERG26 and ERG27 to the endoplasmic reticulum. The C-8 sterol isomerase ERG2 then catalyzes the reaction which results in unsaturation at C-7 in the B ring of sterols and thus converts fecosterol to episterol. The sterol-C5-desaturases ERG3A and ERG3BB then catalyze the introduction of a C-5 double bond in the B ring to produce 5-dehydroepisterol. The C-22 sterol desaturases ERG5A and ERG5B further convert 5-dehydroepisterol into ergosta-5,7,22,24(28)-tetraen-3beta-ol by forming the C-22(23) double bond in the sterol side chain. Finally, ergosta-5,7,22,24(28)-tetraen-3beta-ol is substrate of the C-24(28) sterol reductase ERG4 to produce ergosterol. In Gibberella zeae (strain ATCC MYA-4620 / CBS 123657 / FGSC 9075 / NRRL 31084 / PH-1) (Wheat head blight fungus), this protein is C-22 sterol desaturase ERG5B.